Reading from the N-terminus, the 1042-residue chain is SWI/SNF-related matrix-associated actin-dependent regulator of chromatin subfamily A member 1 (1042 aa).

The disordered stretch occupies residues 25–82 (EDEQPGPSTSQEEGAAAAATEATAATEKGEKKKEKNVSSFQLKLAAKAPKSEKEMDPE). The segment covering 36–50 (EEGAAAAATEATAAT) has biased composition (low complexity). Composition is skewed to basic and acidic residues over residues 51–60 (EKGEKKKEKN) and 73–82 (PKSEKEMDPE). Residues serine 116 and serine 119 each carry the phosphoserine modification. Positions 195-360 (ISLYENGVNG…WALLNFLLPD (166 aa)) constitute a Helicase ATP-binding domain. 208 to 215 (DEMGLGKT) is a binding site for ATP. Residues 311–314 (DEAH) carry the DEAH box motif. Positions 490–641 (VLDKLLAKLK…SIVIQQGRLI (152 aa)) constitute a Helicase C-terminal domain. Glycyl lysine isopeptide (Lys-Gly) (interchain with G-Cter in SUMO2) cross-links involve residues lysine 650, lysine 716, and lysine 738. The tract at residues 819–849 (EQKKIDGAEPLTPEETEEKEKLLTQGFTNWT) is disordered. The span at 828–837 (PLTPEETEEK) shows a compositional bias: basic and acidic residues. The SANT 1 domain occupies 843–895 (QGFTNWTKRDFNQFIKANEKYGRDDIDNIAREVEGKSPEEVMEYSAVFWERCN). At tyrosine 942 the chain carries Phosphotyrosine. One can recognise an SANT 2 domain in the interval 946–1010 (KGKNYTEEED…QRRCNTLISL (65 aa)).

It belongs to the SNF2/RAD54 helicase family. ISWI subfamily. May form homodimers. Component of the ACF-1 ISWI chromatin remodeling complex at least composed of SMARCA1 and BAZ1A, which regulates the spacing of histone octamers on the DNA template to facilitate access to DNA. Within the complex interacts with BAZ1A; the interaction is direct. Component of the WICH-1 ISWI chromatin remodeling complex at least composed of SMARCA1 and BAZ1B/WSTF. Within the complex interacts with BAZ1B/WSTF. Component of the NoRC-1 ISWI chromatin remodeling complex at least composed of SMARCA1 and BAZ2A/TIP5. Within the complex interacts with BAZ2A/TIP5. Component of the BRF-1 ISWI chromatin remodeling complex at least composed of SMARCA1 and BAZ2B. Within the complex interacts with BAZ2B. Component of the NURF-1 ISWI chromatin remodeling complex (also called the nucleosome-remodeling factor (NURF) complex) at least composed of SMARCA1, BPTF, RBBP4 and RBBP7. Within the complex interacts with BPTF. Within the complex interacts with RBBP4 and RBBP7. Component of the CERF-1 ISWI chromatin remodeling complex (also called the CECR2-containing-remodeling factor (CERF) complex) at least composed of CECR2 and SMARCA1. LUZP1 is detected as part of the CERF-1 complex in embryonic stem cells where it is involved in complex stabilization but is not detected in the complex in the testis. Component of the RSF-1 ISWI chromatin remodeling complex at least composed of SMARCA1 and RSF1. Within the complex interacts with RSF1. Interacts with PRLR. Interacts with ERCC6. In terms of assembly, may form homodimers. Component of the BPFT-SMARCA1 complex at least composed of SMARCA1, BPFT, RBBP4 and RBBP7; the complex is catalytically inactive and does not remodel chromatin. Within the complex interacts with BPTF, RBBP4 and RBBP7. Component of the BAZ1A-1-SMARCA1 complex at least composed of SMARCA1 and BAZ1A; the complex is catalytically inactive and does not remodel chromatin. Component of the BAZ1B-1-SMARCA1 complex at least composed of SMARCA1 and BAZ1B; the complex is catalytically inactive and does not remodel chromatin. Expressed in lung, breast, kidney, ovary, skeletal muscle and brain. In terms of tissue distribution, mainly expressed in non-neuronal tissues such as lung, breast, kidney, and ovary.

It is found in the nucleus. The protein resides in the chromosome. It carries out the reaction ATP + H2O = ADP + phosphate + H(+). ATPase that possesses intrinsic ATP-dependent chromatin-remodeling activity. ATPase activity is substrate-dependent, and is increased when nucleosomes are the substrate, but is also catalytically active when DNA alone is the substrate. Catalytic subunit of ISWI chromatin-remodeling complexes, which form ordered nucleosome arrays on chromatin and facilitate access to DNA during DNA-templated processes such as DNA replication, transcription, and repair. Within the ISWI chromatin-remodeling complexes, slides edge- and center-positioned histone octamers away from their original location on the DNA template. Catalytic activity and histone octamer sliding propensity is regulated and determined by components of the ISWI chromatin-remodeling complexes. The BAZ1A-, BAZ1B-, BAZ2A- and BAZ2B-containing ISWI chromatin-remodeling complexes regulate the spacing of nucleosomes along the chromatin and have the ability to slide mononucleosomes to the center of a DNA template. The CECR2- and RSF1-containing ISWI chromatin-remodeling complexes do not have the ability to slide mononucleosomes to the center of a DNA template. Within the NURF-1 and CERF-1 ISWI chromatin remodeling complexes, nucleosomes are the preferred substrate for its ATPase activity. Within the NURF-1 ISWI chromatin-remodeling complex, binds to the promoters of En1 and En2 to positively regulate their expression and promote brain development. May promote neurite outgrowth. May be involved in the development of luteal cells. Facilitates nucleosome assembly during DNA replication, ensuring replication fork progression and genomic stability by preventing replication stress and nascent DNA gaps. Its function is as follows. Catalytically inactive when either DNA or nucleosomes are the substrate and does not possess chromatin-remodeling activity. Acts as a negative regulator of chromatin remodelers by generating inactive complexes. The polypeptide is SWI/SNF-related matrix-associated actin-dependent regulator of chromatin subfamily A member 1 (Homo sapiens (Human)).